Reading from the N-terminus, the 117-residue chain is Minor capsid protein p17 (117 aa).

Asn-12 carries N-linked (GlcNAc...) asparagine; by host glycosylation. Residues 39–59 (AIILGILILLVIILIVVAIVY) form a helical membrane-spanning segment. Residues Asn-61 and Asn-98 are each glycosylated (N-linked (GlcNAc...) asparagine; by host). Residues 97–117 (KNSTTQQHIPSDEQLAELAHS) are disordered.

This sequence belongs to the asfivirus minor capsid protein p17 family. As to quaternary structure, interacts with the minor capsid protein M1249L and with the hexon capsid protein p72 capsomers; these interactions form a rigid zipper structure that stabilizes the capsomers. Interacts with host STING1.

The protein resides in the virion membrane. Its subcellular location is the host endoplasmic reticulum membrane. Its function is as follows. Together with the penton and the other minor capsid proteins (M1249L, p49), forms a complicated network immediately below the outer capsid shell, stabilizing the whole capsid. Three copies of p17 encircle each p72 capsomer in the inner capsid shell, anchoring p72 capsomers on the inner membrane. Required for the assembly of the capsid and icosahedral morphogenesis. Additionally, inhibits the host cGAS-STING pathway through its interaction with STING1 and subsequent interference of the recruitment of downstream components TBK1 and IKBKE. This Ornithodoros (relapsing fever ticks) protein is Minor capsid protein p17.